We begin with the raw amino-acid sequence, 67 residues long: Large ribosomal subunit protein bL35 (67 aa).

This sequence belongs to the bacterial ribosomal protein bL35 family.

The polypeptide is Large ribosomal subunit protein bL35 (Rhizobium johnstonii (strain DSM 114642 / LMG 32736 / 3841) (Rhizobium leguminosarum bv. viciae)).